The following is a 186-amino-acid chain: Acireductone dioxygenase (186 aa).

Residues histidine 103, histidine 105, glutamate 109, and histidine 147 each contribute to the Fe(2+) site. Ni(2+) is bound by residues histidine 103, histidine 105, glutamate 109, and histidine 147.

The protein belongs to the acireductone dioxygenase (ARD) family. As to quaternary structure, monomer. It depends on Fe(2+) as a cofactor. Requires Ni(2+) as cofactor.

The enzyme catalyses 1,2-dihydroxy-5-(methylsulfanyl)pent-1-en-3-one + O2 = 3-(methylsulfanyl)propanoate + CO + formate + 2 H(+). The catalysed reaction is 1,2-dihydroxy-5-(methylsulfanyl)pent-1-en-3-one + O2 = 4-methylsulfanyl-2-oxobutanoate + formate + 2 H(+). It functions in the pathway amino-acid biosynthesis; L-methionine biosynthesis via salvage pathway; L-methionine from S-methyl-5-thio-alpha-D-ribose 1-phosphate: step 5/6. Functionally, catalyzes 2 different reactions between oxygen and the acireductone 1,2-dihydroxy-3-keto-5-methylthiopentene (DHK-MTPene) depending upon the metal bound in the active site. Fe-containing acireductone dioxygenase (Fe-ARD) produces formate and 2-keto-4-methylthiobutyrate (KMTB), the alpha-ketoacid precursor of methionine in the methionine recycle pathway. Ni-containing acireductone dioxygenase (Ni-ARD) produces methylthiopropionate, carbon monoxide and formate, and does not lie on the methionine recycle pathway. The polypeptide is Acireductone dioxygenase (Synechococcus sp. (strain CC9605)).